Consider the following 418-residue polypeptide: Histidinol dehydrogenase (418 aa).

Y119, Q180, and N203 together coordinate NAD(+). Substrate is bound by residues T226, Q248, and H251. 2 residues coordinate Zn(2+): Q248 and H251. Residues E316 and H317 each act as proton acceptor in the active site. Substrate is bound by residues H317, D350, E404, and H409. D350 contributes to the Zn(2+) binding site. H409 lines the Zn(2+) pocket.

This sequence belongs to the histidinol dehydrogenase family. The cofactor is Zn(2+).

It carries out the reaction L-histidinol + 2 NAD(+) + H2O = L-histidine + 2 NADH + 3 H(+). It participates in amino-acid biosynthesis; L-histidine biosynthesis; L-histidine from 5-phospho-alpha-D-ribose 1-diphosphate: step 9/9. Catalyzes the sequential NAD-dependent oxidations of L-histidinol to L-histidinaldehyde and then to L-histidine. This chain is Histidinol dehydrogenase, found in Staphylococcus aureus (strain MRSA252).